Consider the following 277-residue polypeptide: Phosphatidylglycerol--prolipoprotein diacylglyceryl transferase (277 aa).

Helical transmembrane passes span 16-36 (LGPIVIRWYALAYLAGFLFGW), 58-78 (FLTWAIVGVLLGGRLGFVLFY), 93-113 (IWSGGMSFHGGLTGIVAAILL), and 119-139 (GFSPFALGDLVAVAGPVGLFL). Residue arginine 141 participates in a 1,2-diacyl-sn-glycero-3-phospho-(1'-sn-glycerol) binding. Transmembrane regions (helical) follow at residues 182-202 (AALEGLVLFAVLAWLASKPAV), 207-227 (GTLSGTFLVGYGIARILGEVF), and 239-259 (FGVTMGQILSVPMVLIGLWIL).

The protein belongs to the Lgt family.

Its subcellular location is the cell inner membrane. The enzyme catalyses L-cysteinyl-[prolipoprotein] + a 1,2-diacyl-sn-glycero-3-phospho-(1'-sn-glycerol) = an S-1,2-diacyl-sn-glyceryl-L-cysteinyl-[prolipoprotein] + sn-glycerol 1-phosphate + H(+). Its pathway is protein modification; lipoprotein biosynthesis (diacylglyceryl transfer). In terms of biological role, catalyzes the transfer of the diacylglyceryl group from phosphatidylglycerol to the sulfhydryl group of the N-terminal cysteine of a prolipoprotein, the first step in the formation of mature lipoproteins. The chain is Phosphatidylglycerol--prolipoprotein diacylglyceryl transferase from Rhodospirillum centenum (strain ATCC 51521 / SW).